The primary structure comprises 464 residues: NADH-quinone oxidoreductase subunit N (464 aa).

The next 13 helical transmembrane spans lie at methionine 5 to leucine 25, leucine 31 to leucine 51, leucine 63 to serine 83, glutamate 96 to serine 116, leucine 117 to valine 137, leucine 152 to alanine 172, glycine 188 to phenylalanine 208, valine 242 to leucine 262, methionine 286 to leucine 303, alanine 312 to alanine 332, alanine 358 to methionine 378, valine 393 to leucine 415, and leucine 436 to phenylalanine 456.

The protein belongs to the complex I subunit 2 family. As to quaternary structure, NDH-1 is composed of 14 different subunits. Subunits NuoA, H, J, K, L, M, N constitute the membrane sector of the complex.

The protein resides in the cell inner membrane. It carries out the reaction a quinone + NADH + 5 H(+)(in) = a quinol + NAD(+) + 4 H(+)(out). Its function is as follows. NDH-1 shuttles electrons from NADH, via FMN and iron-sulfur (Fe-S) centers, to quinones in the respiratory chain. The immediate electron acceptor for the enzyme in this species is believed to be ubiquinone. Couples the redox reaction to proton translocation (for every two electrons transferred, four hydrogen ions are translocated across the cytoplasmic membrane), and thus conserves the redox energy in a proton gradient. The protein is NADH-quinone oxidoreductase subunit N of Syntrophotalea carbinolica (strain DSM 2380 / NBRC 103641 / GraBd1) (Pelobacter carbinolicus).